The sequence spans 319 residues: Glutathione synthetase (319 aa).

Residues 125–311 (EKLFATLFPQ…IGGLLMDAIE (187 aa)) enclose the ATP-grasp domain. 151 to 208 (FAEQQGDVILKPLDGMGGASIFRHRAGDPNLSVILETLTAHGTQQIMAQGYLPAIKDG) provides a ligand contact to ATP. The Mg(2+) site is built by Glu-282 and Asn-284.

Belongs to the prokaryotic GSH synthase family. Requires Mg(2+) as cofactor. It depends on Mn(2+) as a cofactor.

It catalyses the reaction gamma-L-glutamyl-L-cysteine + glycine + ATP = glutathione + ADP + phosphate + H(+). Its pathway is sulfur metabolism; glutathione biosynthesis; glutathione from L-cysteine and L-glutamate: step 2/2. The sequence is that of Glutathione synthetase from Pseudomonas syringae pv. tomato (strain ATCC BAA-871 / DC3000).